The primary structure comprises 448 residues: Iroquois-class homeodomain protein irx-3 (448 aa).

The segment at residues 108–170 (DPSRPKNATR…NARRRLKKEN (63 aa)) is a DNA-binding region (homeobox; TALE-type). Residues 171 to 247 (KMTWAPRSRT…EVSDGFEDLN (77 aa)) form a disordered region. Residues 195-222 (KHEDEEEIDLENIDTEDIESKEDLDDPD) are compositionally biased toward acidic residues. The segment covering 223–237 (TDIHSDSKTDTRSDS) has biased composition (basic and acidic residues). The span at 238 to 247 (EVSDGFEDLN) shows a compositional bias: acidic residues.

This sequence belongs to the TALE/IRO homeobox family. Primarily expressed in the developing central nervous system (CNS). At gastrula stage, expressed in both the superficial and deep layers of the presumptive neural plate with expression spreading to the prospective hindbrain, spinal cord and midbrain-hindbrain junction as neurulation proceeds. Not expressed in the anterior neural plate and CNS expression in the tadpole excludes the forebrain. Outside of the CNS, expressed around the closing blastopore at early gastrula stages and as gastrulation proceeds, expression switches to the anterior lateral plate mesoderm. In tadpoles, expressed in the ectodermal layer of the branchial arches, and in the otic vesicle. Also expressed in specific and overlapping dynamic patterns with irx1 and irx2 during pronephric kidney development. Renal expression begins before segment-specific terminal differentiation in the pronephric anlage at mid-neurula stage, and is later found in proximal tubule PT3 as well as intermediate tubule segments IT1 and IT2, with expression in the kidney being maintained through to the tadpole stage.

It localises to the nucleus. Acts partially redundantly with other irx members in neural patterning. Required for formation of the posterior forebrain, midbrain, hindbrain, and to a lesser extent, spinal cord. Both up-regulates and down-regulates gene expression during neural development. Acts early in neural plate development to induce proneural gene expression and specify a neural precursor state. Also up-regulates repressors that prevent neuronal differentiation. Required during at least two stages of pronephros kidney development; during neurula stages, maintains transcription of key renal genes to define the size and identity of the pronephric anlage, probably in part through regulation of bmp-signaling. Subsequently required for proper formation of the intermediate tubule segment of the pronephros. This is Iroquois-class homeodomain protein irx-3 (irx3) from Xenopus laevis (African clawed frog).